The sequence spans 64 residues: DNA-binding protein 7 (64 aa).

An N6-methyllysine mark is found at K5 and K7.

Belongs to the 7 kDa DNA-binding/endoribonuclease P2 family. In terms of assembly, monomer.

The protein resides in the cytoplasm. In terms of biological role, can constrain negative DNA supercoils. May be involved in maintaining the integrity of the genome at high temperature. The protein is DNA-binding protein 7 of Sulfurisphaera tokodaii (strain DSM 16993 / JCM 10545 / NBRC 100140 / 7) (Sulfolobus tokodaii).